A 336-amino-acid chain; its full sequence is tRNA N6-adenosine threonylcarbamoyltransferase (336 aa).

Fe cation-binding residues include histidine 114 and histidine 118. Substrate is bound by residues 136–140 (LVSGG), aspartate 169, glycine 182, aspartate 186, and asparagine 275. Aspartate 302 is a binding site for Fe cation.

This sequence belongs to the KAE1 / TsaD family. Fe(2+) is required as a cofactor.

The protein resides in the cytoplasm. The catalysed reaction is L-threonylcarbamoyladenylate + adenosine(37) in tRNA = N(6)-L-threonylcarbamoyladenosine(37) in tRNA + AMP + H(+). Functionally, required for the formation of a threonylcarbamoyl group on adenosine at position 37 (t(6)A37) in tRNAs that read codons beginning with adenine. Is involved in the transfer of the threonylcarbamoyl moiety of threonylcarbamoyl-AMP (TC-AMP) to the N6 group of A37, together with TsaE and TsaB. TsaD likely plays a direct catalytic role in this reaction. This Streptococcus agalactiae serotype Ia (strain ATCC 27591 / A909 / CDC SS700) protein is tRNA N6-adenosine threonylcarbamoyltransferase.